The sequence spans 172 residues: Translation initiation factor IF-3 (172 aa).

Belongs to the IF-3 family. Monomer.

It localises to the cytoplasm. Functionally, IF-3 binds to the 30S ribosomal subunit and shifts the equilibrium between 70S ribosomes and their 50S and 30S subunits in favor of the free subunits, thus enhancing the availability of 30S subunits on which protein synthesis initiation begins. The chain is Translation initiation factor IF-3 from Bartonella tribocorum (strain CIP 105476 / IBS 506).